Consider the following 450-residue polypeptide: tRNA-2-methylthio-N(6)-dimethylallyladenosine synthase (450 aa).

Positions 17-131 (KKFFVKTYGC…LNHVLDEVLA (115 aa)) constitute an MTTase N-terminal domain. Residues Cys26, Cys62, Cys94, Cys168, Cys172, and Cys175 each coordinate [4Fe-4S] cluster. The Radical SAM core domain occupies 154-385 (REDQIKAYVS…LQLQDTIYMK (232 aa)). Positions 388-450 (QAFLGQTVEV…SHQTLLGDLQ (63 aa)) constitute a TRAM domain.

Belongs to the methylthiotransferase family. MiaB subfamily. As to quaternary structure, monomer. [4Fe-4S] cluster serves as cofactor.

The protein localises to the cytoplasm. It catalyses the reaction N(6)-dimethylallyladenosine(37) in tRNA + (sulfur carrier)-SH + AH2 + 2 S-adenosyl-L-methionine = 2-methylsulfanyl-N(6)-dimethylallyladenosine(37) in tRNA + (sulfur carrier)-H + 5'-deoxyadenosine + L-methionine + A + S-adenosyl-L-homocysteine + 2 H(+). Its function is as follows. Catalyzes the methylthiolation of N6-(dimethylallyl)adenosine (i(6)A), leading to the formation of 2-methylthio-N6-(dimethylallyl)adenosine (ms(2)i(6)A) at position 37 in tRNAs that read codons beginning with uridine. The polypeptide is tRNA-2-methylthio-N(6)-dimethylallyladenosine synthase (Protochlamydia amoebophila (strain UWE25)).